The primary structure comprises 242 residues: ATP-dependent dethiobiotin synthetase BioD (242 aa).

Residue 15–20 (DVGKTV) coordinates ATP. Residue T19 participates in Mg(2+) binding. K40 is a catalytic residue. S44 contributes to the substrate binding site. Mg(2+) is bound at residue E117. ATP contacts are provided by residues 117-120 (EGAG), 178-179 (NQ), and 208-210 (PYS).

The protein belongs to the dethiobiotin synthetase family. As to quaternary structure, homodimer. Requires Mg(2+) as cofactor.

The protein resides in the cytoplasm. It carries out the reaction (7R,8S)-7,8-diammoniononanoate + CO2 + ATP = (4R,5S)-dethiobiotin + ADP + phosphate + 3 H(+). The protein operates within cofactor biosynthesis; biotin biosynthesis; biotin from 7,8-diaminononanoate: step 1/2. In terms of biological role, catalyzes a mechanistically unusual reaction, the ATP-dependent insertion of CO2 between the N7 and N8 nitrogen atoms of 7,8-diaminopelargonic acid (DAPA, also called 7,8-diammoniononanoate) to form a ureido ring. This chain is ATP-dependent dethiobiotin synthetase BioD, found in Halalkalibacterium halodurans (strain ATCC BAA-125 / DSM 18197 / FERM 7344 / JCM 9153 / C-125) (Bacillus halodurans).